The following is a 245-amino-acid chain: Chymotrypsin B (245 aa).

Disulfide bonds link Cys-1/Cys-121, Cys-42/Cys-58, Cys-135/Cys-201, Cys-167/Cys-182, and Cys-191/Cys-220. Residues 14 to 15 (AR) constitute a propeptide that is removed on maturation. In terms of domain architecture, Peptidase S1 spans 16–243 (IVNGEEAVPH…LRGWVDQILA (228 aa)). Residues His-57 and Asp-101 each act as charge relay system in the active site. Ser-195 functions as the Charge relay system in the catalytic mechanism.

This sequence belongs to the peptidase S1 family.

The protein resides in the secreted. Its subcellular location is the extracellular space. The enzyme catalyses Preferential cleavage: Tyr-|-Xaa, Trp-|-Xaa, Phe-|-Xaa, Leu-|-Xaa.. The polypeptide is Chymotrypsin B (Gadus morhua (Atlantic cod)).